Reading from the N-terminus, the 408-residue chain is Argininosuccinate synthase (408 aa).

ATP is bound by residues 12-20 and alanine 39; that span reads AYSGGLDTS. 2 residues coordinate L-citrulline: tyrosine 92 and serine 97. Residue glycine 122 participates in ATP binding. 3 residues coordinate L-aspartate: threonine 124, asparagine 128, and aspartate 129. Asparagine 128 is an L-citrulline binding site. Arginine 132, serine 183, serine 192, glutamate 268, and tyrosine 280 together coordinate L-citrulline.

The protein belongs to the argininosuccinate synthase family. Type 1 subfamily. Homotetramer.

It is found in the cytoplasm. It catalyses the reaction L-citrulline + L-aspartate + ATP = 2-(N(omega)-L-arginino)succinate + AMP + diphosphate + H(+). It functions in the pathway amino-acid biosynthesis; L-arginine biosynthesis; L-arginine from L-ornithine and carbamoyl phosphate: step 2/3. In Caulobacter vibrioides (strain ATCC 19089 / CIP 103742 / CB 15) (Caulobacter crescentus), this protein is Argininosuccinate synthase.